The sequence spans 217 residues: Protein GrpE (217 aa).

This sequence belongs to the GrpE family. Homodimer.

It localises to the cytoplasm. Its function is as follows. Participates actively in the response to hyperosmotic and heat shock by preventing the aggregation of stress-denatured proteins, in association with DnaK and GrpE. It is the nucleotide exchange factor for DnaK and may function as a thermosensor. Unfolded proteins bind initially to DnaJ; upon interaction with the DnaJ-bound protein, DnaK hydrolyzes its bound ATP, resulting in the formation of a stable complex. GrpE releases ADP from DnaK; ATP binding to DnaK triggers the release of the substrate protein, thus completing the reaction cycle. Several rounds of ATP-dependent interactions between DnaJ, DnaK and GrpE are required for fully efficient folding. The chain is Protein GrpE from Mycoplasma pneumoniae (strain ATCC 29342 / M129 / Subtype 1) (Mycoplasmoides pneumoniae).